We begin with the raw amino-acid sequence, 876 residues long: Phosphoenolpyruvate carboxylase (876 aa).

Residues His138 and Lys543 contribute to the active site.

This sequence belongs to the PEPCase type 1 family. The cofactor is Mg(2+).

The enzyme catalyses oxaloacetate + phosphate = phosphoenolpyruvate + hydrogencarbonate. Its function is as follows. Forms oxaloacetate, a four-carbon dicarboxylic acid source for the tricarboxylic acid cycle. This Pseudomonas fluorescens (strain ATCC BAA-477 / NRRL B-23932 / Pf-5) protein is Phosphoenolpyruvate carboxylase.